The primary structure comprises 153 residues: Profilin (153 aa).

This sequence belongs to the profilin family. In terms of assembly, occurs in many kinds of cells as a complex with monomeric actin in a 1:1 ratio.

The protein resides in the cytoplasm. The protein localises to the cytoskeleton. Functionally, binds to actin and affects the structure of the cytoskeleton. At high concentrations, profilin prevents the polymerization of actin, whereas it enhances it at low concentrations. By binding to PIP2, it inhibits the formation of IP3 and DG. This chain is Profilin, found in Tetrahymena pyriformis.